The sequence spans 125 residues: Large ribosomal subunit protein uL18 (125 aa).

The residue at position 2 (Gly2) is an N-acetylglycine. N6-acetyllysine occurs at positions 5 and 48.

Belongs to the universal ribosomal protein uL18 family. Component of the large ribosomal subunit (LSU). Part of the 5S RNP complex, which is a LSU subcomplex composed of the 5S RNA, RPL5 and RPL11. Component of a hexameric 5S RNP precursor complex, composed of 5S RNA, RRS1, RPF2/BXDC1, RPL5, RPL11 and HEATR3; this complex acts as a precursor for ribosome assembly. Interacts with NVL in an ATP-dependent manner. Interacts with RRP1B. Interacts with IPO5, IPO7 and KPNB1; these interactions may be involved in RPL5 nuclear import for the assembly of ribosomal subunits. Interacts with RRP1B.

The protein resides in the cytoplasm. It is found in the nucleus. Its subcellular location is the nucleolus. Component of the ribosome, a large ribonucleoprotein complex responsible for the synthesis of proteins in the cell. The small ribosomal subunit (SSU) binds messenger RNAs (mRNAs) and translates the encoded message by selecting cognate aminoacyl-transfer RNA (tRNA) molecules. The large subunit (LSU) contains the ribosomal catalytic site termed the peptidyl transferase center (PTC), which catalyzes the formation of peptide bonds, thereby polymerizing the amino acids delivered by tRNAs into a polypeptide chain. The nascent polypeptides leave the ribosome through a tunnel in the LSU and interact with protein factors that function in enzymatic processing, targeting, and the membrane insertion of nascent chains at the exit of the ribosomal tunnel. As part of the 5S RNP/5S ribonucleoprotein particle it is an essential component of the LSU, required for its formation and the maturation of rRNAs. It also couples ribosome biogenesis to p53/TP53 activation. As part of the 5S RNP it accumulates in the nucleoplasm and inhibits MDM2, when ribosome biogenesis is perturbed, mediating the stabilization and the activation of TP53. This Sus scrofa (Pig) protein is Large ribosomal subunit protein uL18 (RPL5).